Reading from the N-terminus, the 248-residue chain is Ubiquinone/menaquinone biosynthesis C-methyltransferase UbiE (248 aa).

The S-adenosyl-L-methionine site is built by serine 68 and aspartate 92.

It belongs to the class I-like SAM-binding methyltransferase superfamily. MenG/UbiE family.

The enzyme catalyses a 2-demethylmenaquinol + S-adenosyl-L-methionine = a menaquinol + S-adenosyl-L-homocysteine + H(+). It carries out the reaction a 2-methoxy-6-(all-trans-polyprenyl)benzene-1,4-diol + S-adenosyl-L-methionine = a 5-methoxy-2-methyl-3-(all-trans-polyprenyl)benzene-1,4-diol + S-adenosyl-L-homocysteine + H(+). Its pathway is quinol/quinone metabolism; menaquinone biosynthesis; menaquinol from 1,4-dihydroxy-2-naphthoate: step 2/2. The protein operates within cofactor biosynthesis; ubiquinone biosynthesis. Methyltransferase required for the conversion of demethylmenaquinol (DMKH2) to menaquinol (MKH2) and the conversion of 2-polyprenyl-6-methoxy-1,4-benzoquinol (DDMQH2) to 2-polyprenyl-3-methyl-6-methoxy-1,4-benzoquinol (DMQH2). The polypeptide is Ubiquinone/menaquinone biosynthesis C-methyltransferase UbiE (Rickettsia akari (strain Hartford)).